The following is a 418-amino-acid chain: Actin-related protein 3 (418 aa).

The protein belongs to the actin family. ARP3 subfamily. Component of the Arp2/3 complex composed of actr2/arp2, actr3/arp3, arpc1b, arpc2, arpc3, arpc4 and arpc5.

It is found in the cytoplasm. The protein resides in the cytoskeleton. Its subcellular location is the cell projection. It localises to the nucleus. Its function is as follows. ATP-binding component of the Arp2/3 complex, a multiprotein complex that mediates actin polymerization upon stimulation by nucleation-promoting factor (NPF). The Arp2/3 complex mediates the formation of branched actin networks in the cytoplasm, providing the force for cell motility. Seems to contact the pointed end of the daughter actin filament. In addition to its role in the cytoplasmic cytoskeleton, the Arp2/3 complex also promotes actin polymerization in the nucleus, thereby regulating gene transcription and repair of damaged DNA. The Arp2/3 complex promotes homologous recombination (HR) repair in response to DNA damage by promoting nuclear actin polymerization, leading to drive motility of double-strand breaks (DSBs). This chain is Actin-related protein 3 (actr3), found in Takifugu rubripes (Japanese pufferfish).